The primary structure comprises 473 residues: 3-isopropylmalate dehydratase large subunit (473 aa).

[4Fe-4S] cluster contacts are provided by cysteine 354, cysteine 414, and cysteine 417. The interval 425 to 448 (LAPGQRSASTSNRNFEGRQGRGGR) is disordered.

Belongs to the aconitase/IPM isomerase family. LeuC type 1 subfamily. As to quaternary structure, heterodimer of LeuC and LeuD. The cofactor is [4Fe-4S] cluster.

It carries out the reaction (2R,3S)-3-isopropylmalate = (2S)-2-isopropylmalate. The protein operates within amino-acid biosynthesis; L-leucine biosynthesis; L-leucine from 3-methyl-2-oxobutanoate: step 2/4. Functionally, catalyzes the isomerization between 2-isopropylmalate and 3-isopropylmalate, via the formation of 2-isopropylmaleate. In Acidothermus cellulolyticus (strain ATCC 43068 / DSM 8971 / 11B), this protein is 3-isopropylmalate dehydratase large subunit.